The primary structure comprises 186 residues: Elongation factor P (186 aa).

The protein belongs to the elongation factor P family.

It localises to the cytoplasm. Its pathway is protein biosynthesis; polypeptide chain elongation. Its function is as follows. Involved in peptide bond synthesis. Stimulates efficient translation and peptide-bond synthesis on native or reconstituted 70S ribosomes in vitro. Probably functions indirectly by altering the affinity of the ribosome for aminoacyl-tRNA, thus increasing their reactivity as acceptors for peptidyl transferase. The chain is Elongation factor P from Neisseria meningitidis serogroup A / serotype 4A (strain DSM 15465 / Z2491).